The sequence spans 78 residues: MEFREQVLDLLAEVAENNIVKENPDVEIFEEGIIDSFQTVGLLLEIQNKLDIEVSIMDFDRDEWATPNKIVEALEELR.

The Carrier domain occupies 1-78 (MEFREQVLDL…KIVEALEELR (78 aa)). Ser-36 bears the O-(pantetheine 4'-phosphoryl)serine mark.

The protein belongs to the DltC family. 4'-phosphopantetheine is transferred from CoA to a specific serine of apo-DCP.

It localises to the cytoplasm. Its pathway is cell wall biogenesis; lipoteichoic acid biosynthesis. Functionally, carrier protein involved in the D-alanylation of lipoteichoic acid (LTA). The loading of thioester-linked D-alanine onto DltC is catalyzed by D-alanine--D-alanyl carrier protein ligase DltA. The DltC-carried D-alanyl group is further transferred to cell membrane phosphatidylglycerol (PG) by forming an ester bond, probably catalyzed by DltD. D-alanylation of LTA plays an important role in modulating the properties of the cell wall in Gram-positive bacteria, influencing the net charge of the cell wall. This chain is D-alanyl carrier protein, found in Staphylococcus epidermidis (strain ATCC 35984 / DSM 28319 / BCRC 17069 / CCUG 31568 / BM 3577 / RP62A).